Consider the following 218-residue polypeptide: Pyridoxine/pyridoxamine 5'-phosphate oxidase (218 aa).

Substrate-binding positions include 14–17 and Lys-72; that span reads RREY. Residues 67–72, 82–83, Arg-88, Lys-89, and Gln-111 contribute to the FMN site; these read RIVLLK and YT. Residues Tyr-129, Arg-133, and Ser-137 each coordinate substrate. FMN-binding positions include 146 to 147 and Trp-191; that span reads QS. 197–199 lines the substrate pocket; it reads RLH. Arg-201 is a binding site for FMN.

This sequence belongs to the pyridoxamine 5'-phosphate oxidase family. In terms of assembly, homodimer. FMN is required as a cofactor.

It carries out the reaction pyridoxamine 5'-phosphate + O2 + H2O = pyridoxal 5'-phosphate + H2O2 + NH4(+). It catalyses the reaction pyridoxine 5'-phosphate + O2 = pyridoxal 5'-phosphate + H2O2. Its pathway is cofactor metabolism; pyridoxal 5'-phosphate salvage; pyridoxal 5'-phosphate from pyridoxamine 5'-phosphate: step 1/1. The protein operates within cofactor metabolism; pyridoxal 5'-phosphate salvage; pyridoxal 5'-phosphate from pyridoxine 5'-phosphate: step 1/1. Catalyzes the oxidation of either pyridoxine 5'-phosphate (PNP) or pyridoxamine 5'-phosphate (PMP) into pyridoxal 5'-phosphate (PLP). This is Pyridoxine/pyridoxamine 5'-phosphate oxidase from Escherichia coli O45:K1 (strain S88 / ExPEC).